Here is a 910-residue protein sequence, read N- to C-terminus: Eukaryotic translation initiation factor 3 subunit C (910 aa).

Residues 1–21 are disordered; sequence MSRFFANGSESESESSEEEIQ. The segment covering 11–20 has biased composition (acidic residues); it reads SESESSEEEI. A phosphoserine mark is found at Ser34, Ser165, Ser176, and Ser185. Residues 157–279 form a disordered region; the sequence is FREAPDQESE…IRKRAEDDED (123 aa). A compositionally biased stretch (acidic residues) spans 162–186; sequence DQESEAEDEVVALESDGGDAGDDSD. A compositionally biased stretch (low complexity) spans 194–207; sequence AVPKAVKSAPAKAA. Residues 209–235 are compositionally biased toward acidic residues; it reads ADDDDSDDSIDWDSDSESETESSDDEN. The span at 240–268 shows a compositional bias: basic and acidic residues; it reads MRERFLKRTTEKEEKDDDKRKDKRKEQKT. The region spanning 639–815 is the PCI domain; the sequence is FHMHINLELL…ETVGMHRSEP (177 aa). Residues 847–910 are disordered; it reads FFQRGNMGNR…QQQVQTIDEE (64 aa). Positions 862 to 874 are enriched in low complexity; sequence NRNQNNQGGNWLG. Residues 882–891 are compositionally biased toward basic residues; it reads RNRNQRGHHK. A compositionally biased stretch (low complexity) spans 895 to 910; it reads DRQQQQQQQVQTIDEE.

This sequence belongs to the eIF-3 subunit C family. Component of the eukaryotic translation initiation factor 3 (eIF-3) complex. The eIF-3 complex interacts with pix.

The protein localises to the cytoplasm. Component of the eukaryotic translation initiation factor 3 (eIF-3) complex, which is involved in protein synthesis of a specialized repertoire of mRNAs and, together with other initiation factors, stimulates binding of mRNA and methionyl-tRNAi to the 40S ribosome. The eIF-3 complex specifically targets and initiates translation of a subset of mRNAs involved in cell proliferation. The sequence is that of Eukaryotic translation initiation factor 3 subunit C from Drosophila melanogaster (Fruit fly).